The following is a 98-amino-acid chain: Ribonuclease kappa (98 aa).

The next 2 membrane-spanning stretches (helical) occupy residues 13–33 (ACGI…GIFF) and 65–85 (VSYN…FSFC).

It belongs to the RNase K family. In terms of assembly, interacts with the proton translocation complex V0 of the V-ATPase. Interacts with ATP6AP1. As to expression, expressed in brain (at protein level).

It localises to the endomembrane system. The protein localises to the cytoplasmic vesicle. It is found in the clathrin-coated vesicle membrane. Its function is as follows. Endoribonuclease which preferentially cleaves ApU and ApG phosphodiester bonds. Hydrolyzes UpU bonds at a lower rate. Regulates the activity of vacuolar (H+)-ATPase (V-ATPase) which is responsible for acidifying and maintaining the pH of intracellular compartments. Required at an early stage of receptor-mediated endocytosis. The chain is Ribonuclease kappa (RNASEK) from Bos taurus (Bovine).